Here is a 105-residue protein sequence, read N- to C-terminus: Thioredoxin (105 aa).

In terms of domain architecture, Thioredoxin spans 2–105 (VKQIESKSAF…KLEATINELL (104 aa)). Position 3 is an N6-acetyllysine (lysine 3). The residue at position 8 (lysine 8) is an N6-succinyllysine. Catalysis depends on nucleophile residues cysteine 32 and cysteine 35. Residues cysteine 32 and cysteine 35 are joined by a disulfide bond. Position 39 is an N6-acetyllysine (lysine 39). S-nitrosocysteine is present on residues cysteine 62 and cysteine 69. Position 73 is an S-nitrosocysteine; alternate (cysteine 73). Position 94 is an N6-acetyllysine; alternate (lysine 94). At lysine 94 the chain carries N6-succinyllysine; alternate.

The protein belongs to the thioredoxin family. As to quaternary structure, homodimer; disulfide-linked. Interacts with TXNIP through the redox-active site. Interacts with MAP3K5 and CASP3. Interacts with APEX1; the interaction stimulates the FOS/JUN AP-1 DNA-binding activity in a redox-dependent manner. In the fully reduced protein, both Cys-69 and Cys-73 are nitrosylated in response to nitric oxide (NO). When two disulfide bonds are present in the protein, only Cys-73 is nitrosylated. Cys-73 can serve as donor for nitrosylation of target proteins.

It localises to the nucleus. The protein resides in the cytoplasm. It is found in the secreted. Its function is as follows. Participates in various redox reactions through the reversible oxidation of its active center dithiol to a disulfide and catalyzes dithiol-disulfide exchange reactions. Plays a role in the reversible S-nitrosylation of cysteine residues in target proteins, and thereby contributes to the response to intracellular nitric oxide. Nitrosylates the active site Cys of CASP3 in response to nitric oxide (NO), and thereby inhibits caspase-3 activity. Induces the FOS/JUN AP-1 DNA binding activity in ionizing radiation (IR) cells through its oxidation/reduction status and stimulates AP-1 transcriptional activity. This is Thioredoxin (TXN) from Oryctolagus cuniculus (Rabbit).